The chain runs to 454 residues: CBL-interacting protein kinase 4 (454 aa).

Residues 25–284 enclose the Protein kinase domain; the sequence is YELGRMLGRG…ESLAAHHPWF (260 aa). ATP is bound by residues 31 to 39 and Lys-54; that span reads LGRGTFAKV. Asp-151 (proton acceptor) is an active-site residue. The tract at residues 169–198 is activation loop; the sequence is DFGLAALPDTLRDDGRLHTACGTPAYAAPE. An NAF domain is found at 311 to 335; sequence APPPPLNAFDIISMSPGLDLSGLFG. The segment at 341 to 370 is PPI; it reads LREKRFTTTASPEKTLEQLGLAGGKLGYVV.

Belongs to the protein kinase superfamily. CAMK Ser/Thr protein kinase family. SNF1 subfamily. Mn(2+) is required as a cofactor.

The enzyme catalyses L-seryl-[protein] + ATP = O-phospho-L-seryl-[protein] + ADP + H(+). It catalyses the reaction L-threonyl-[protein] + ATP = O-phospho-L-threonyl-[protein] + ADP + H(+). Its function is as follows. CIPK serine-threonine protein kinases interact with CBL proteins. Binding of a CBL protein to the regulatory NAF domain of CIPK protein lead to the activation of the kinase in a calcium-dependent manner. This chain is CBL-interacting protein kinase 4 (CIPK4), found in Oryza sativa subsp. japonica (Rice).